The chain runs to 307 residues: DDRGK domain-containing protein 1 (307 aa).

Over 1–2 the chain is Lumenal; the sequence is MD. A helical transmembrane segment spans residues 3-23; that stretch reads LILLVGIATALLLILITLYFL. At 24-307 the chain is on the cytoplasmic side; that stretch reads QSKNAKTETK…TPVAAGESSA (284 aa). Residues 31–175 are disordered; the sequence is ETKAAAQPQR…EADRLAKEER (145 aa). The segment covering 52 to 83 has biased composition (low complexity); the sequence is RRAQIARNQRNRLRQNQNAPAVAAAAAPAAAV. The segment covering 107–175 has biased composition (basic and acidic residues); sequence LDEKMGAKKR…EADRLAKEER (69 aa).

It belongs to the DDRGK1 family. In terms of assembly, interacts with Atg9; the interaction is transient.

It is found in the endoplasmic reticulum membrane. Functionally, substrate adapter for ufmylation, the covalent attachment of the ubiquitin-like modifier UFM1 to substrate proteins. Required for ufmylation of Atg9; protects the nervous system during aging, possibly by stabilizing Atg9 and supporting its function. The chain is DDRGK domain-containing protein 1 from Drosophila virilis (Fruit fly).